The sequence spans 295 residues: Ethanolamine ammonia-lyase small subunit (295 aa).

Adenosylcob(III)alamin is bound by residues Val207, Glu228, and Cys258.

It belongs to the EutC family. The basic unit is a heterodimer which dimerizes to form tetramers. The heterotetramers trimerize; 6 large subunits form a core ring with 6 small subunits projecting outwards. The cofactor is adenosylcob(III)alamin.

It is found in the bacterial microcompartment. The catalysed reaction is ethanolamine = acetaldehyde + NH4(+). It participates in amine and polyamine degradation; ethanolamine degradation. In terms of biological role, catalyzes the deamination of various vicinal amino-alcohols to oxo compounds. Allows this organism to utilize ethanolamine as the sole source of nitrogen and carbon in the presence of external vitamin B12. In Escherichia coli O81 (strain ED1a), this protein is Ethanolamine ammonia-lyase small subunit.